Here is a 164-residue protein sequence, read N- to C-terminus: FMN reductase (NADH) RutF (164 aa).

The protein belongs to the non-flavoprotein flavin reductase family. RutF subfamily.

It carries out the reaction FMNH2 + NAD(+) = FMN + NADH + 2 H(+). Catalyzes the reduction of FMN to FMNH2 which is used to reduce pyrimidine by RutA via the Rut pathway. In Klebsiella pneumoniae subsp. pneumoniae (strain ATCC 700721 / MGH 78578), this protein is FMN reductase (NADH) RutF.